The following is a 179-amino-acid chain: Large ribosomal subunit protein uL6 (179 aa).

Belongs to the universal ribosomal protein uL6 family. In terms of assembly, part of the 50S ribosomal subunit.

Its function is as follows. This protein binds to the 23S rRNA, and is important in its secondary structure. It is located near the subunit interface in the base of the L7/L12 stalk, and near the tRNA binding site of the peptidyltransferase center. The protein is Large ribosomal subunit protein uL6 of Spiroplasma citri.